The sequence spans 747 residues: Endopolyphosphatase (747 aa).

Position 1 (Met1) is a topological domain, cytoplasmic. A helical; Signal-anchor for type II membrane protein membrane pass occupies residues 2–22 (LPKTLTIWASLASLAVAQSGQ). The Vacuolar portion of the chain corresponds to 23-747 (VVFAKNADGK…AEYLEEPDDD (725 aa)). Residues Asn134, Asn191, and Asn463 are each glycosylated (N-linked (GlcNAc...) asparagine). Residues 570 to 640 (AVATSSEPES…PKFPKDLQPG (71 aa)) are disordered. The span at 577–586 (PESDDYDSDL) shows a compositional bias: acidic residues. Positions 591–625 (KKGKKKGKKGKKGKKGKKGKKKKGKKGKKGKKGKR) are enriched in basic residues. Positions 626 to 635 (DKSMPPKFPK) are enriched in basic and acidic residues. The N-linked (GlcNAc...) asparagine glycan is linked to Asn659.

This sequence belongs to the endopolyphosphatase PPN1 family. Requires a divalent metal cation as cofactor. Processing by proteases in the vacuole may be required for activation.

The protein resides in the vacuole membrane. It carries out the reaction [phosphate](n+1) + n H2O = (n+1) phosphate + n H(+). Functionally, catalyzes the hydrolysis of inorganic polyphosphate (polyP) chains of many hundreds of phosphate residues into shorter lengths. The sequence is that of Endopolyphosphatase (PPN1) from Yarrowia lipolytica (strain CLIB 122 / E 150) (Yeast).